The primary structure comprises 555 residues: Hydroxylamine reductase (555 aa).

[4Fe-4S] cluster is bound by residues Cys-3, Cys-6, Cys-18, and Cys-25. 8 residues coordinate hybrid [4Fe-2O-2S] cluster: His-252, Glu-276, Cys-320, Cys-407, Cys-435, Cys-460, Glu-494, and Lys-496. At Cys-407 the chain carries Cysteine persulfide.

This sequence belongs to the HCP family. [4Fe-4S] cluster is required as a cofactor. Hybrid [4Fe-2O-2S] cluster serves as cofactor.

Its subcellular location is the cytoplasm. It carries out the reaction A + NH4(+) + H2O = hydroxylamine + AH2 + H(+). In terms of biological role, catalyzes the reduction of hydroxylamine to form NH(3) and H(2)O. This chain is Hydroxylamine reductase, found in Burkholderia ambifaria (strain MC40-6).